Consider the following 76-residue polypeptide: uncharacterized protein (76 aa).

3 helical membrane-spanning segments follow: residues Met1–Leu21, Cys35–Ile55, and Asn56–Ile76.

It is found in the cell membrane. This is an uncharacterized protein from Borreliella burgdorferi (strain ATCC 35210 / DSM 4680 / CIP 102532 / B31) (Borrelia burgdorferi).